The chain runs to 262 residues: MLKIADTTFTSRLFTGTGKFATAELMLEALRASGSQLITMAMKRVDLQAGNDAILAPLRQLGVRLLPNTSGAKTAQEAVFAARLAREALGTHWVKLEIHPDVKYLLPDPIETLKAAEILVKEGFVVLPYCGADPVLCKRLEEAGCAAVMPLGAPIGSNLGLRTRDFLQIIIAQAKVPVVVDAGIGAPSHALEAIELGADAVLVNTAIAVARSPVKMAHAFRLAVESGELACQAGLGNRQFDRAIATSPLTGFLSQLEEENHV.

K95 acts as the Schiff-base intermediate with DXP in catalysis. 1-deoxy-D-xylulose 5-phosphate-binding positions include G156, 182-183 (AG), and 204-205 (NT).

Belongs to the ThiG family. Homotetramer. Forms heterodimers with either ThiH or ThiS.

Its subcellular location is the cytoplasm. It catalyses the reaction [ThiS sulfur-carrier protein]-C-terminal-Gly-aminoethanethioate + 2-iminoacetate + 1-deoxy-D-xylulose 5-phosphate = [ThiS sulfur-carrier protein]-C-terminal Gly-Gly + 2-[(2R,5Z)-2-carboxy-4-methylthiazol-5(2H)-ylidene]ethyl phosphate + 2 H2O + H(+). It functions in the pathway cofactor biosynthesis; thiamine diphosphate biosynthesis. Its function is as follows. Catalyzes the rearrangement of 1-deoxy-D-xylulose 5-phosphate (DXP) to produce the thiazole phosphate moiety of thiamine. Sulfur is provided by the thiocarboxylate moiety of the carrier protein ThiS. In vitro, sulfur can be provided by H(2)S. This chain is Thiazole synthase, found in Yersinia enterocolitica serotype O:8 / biotype 1B (strain NCTC 13174 / 8081).